We begin with the raw amino-acid sequence, 488 residues long: Endoglucanase A (488 aa).

Substrate is bound by residues histidine 59, 63–64 (WY), tyrosine 90, and histidine 125. The active-site Proton donor is the glutamate 163. Position 226 (tyrosine 226) interacts with substrate. Glutamate 252 acts as the Nucleophile in catalysis. Substrate-binding positions include 258 to 259 (AT), tryptophan 286, and 291 to 293 (KDE). Disordered regions lie at residues 326-362 (ESAS…AWDP) and 388-451 (EPGA…WDPT). Pro residues-rich tracts occupy residues 332–353 (PSDP…PPSD) and 405–416 (PSEPSDPPPPSE). Positions 417 to 433 (PEPDPGEPDPGEPDPGE) are enriched in acidic residues.

The protein belongs to the glycosyl hydrolase 5 (cellulase A) family.

The enzyme catalyses Endohydrolysis of (1-&gt;4)-beta-D-glucosidic linkages in cellulose, lichenin and cereal beta-D-glucans.. The polypeptide is Endoglucanase A (celA) (Evansella cellulosilytica (strain ATCC 21833 / DSM 2522 / FERM P-1141 / JCM 9156 / N-4) (Bacillus cellulosilyticus)).